The chain runs to 130 residues: Small ribosomal subunit protein uS11 (130 aa).

This sequence belongs to the universal ribosomal protein uS11 family. As to quaternary structure, part of the 30S ribosomal subunit. Interacts with proteins S7 and S18. Binds to IF-3.

Its function is as follows. Located on the platform of the 30S subunit, it bridges several disparate RNA helices of the 16S rRNA. Forms part of the Shine-Dalgarno cleft in the 70S ribosome. In Rippkaea orientalis (strain PCC 8801 / RF-1) (Cyanothece sp. (strain PCC 8801)), this protein is Small ribosomal subunit protein uS11.